We begin with the raw amino-acid sequence, 222 residues long: 7-cyano-7-deazaguanine synthase (222 aa).

ATP is bound at residue 11–21 (LSGGMDSAVLL). The Zn(2+) site is built by Cys-192, Cys-200, Cys-203, and Cys-206.

This sequence belongs to the QueC family. The cofactor is Zn(2+).

It catalyses the reaction 7-carboxy-7-deazaguanine + NH4(+) + ATP = 7-cyano-7-deazaguanine + ADP + phosphate + H2O + H(+). The protein operates within purine metabolism; 7-cyano-7-deazaguanine biosynthesis. Catalyzes the ATP-dependent conversion of 7-carboxy-7-deazaguanine (CDG) to 7-cyano-7-deazaguanine (preQ(0)). In Sulfurihydrogenibium sp. (strain YO3AOP1), this protein is 7-cyano-7-deazaguanine synthase.